A 316-amino-acid polypeptide reads, in one-letter code: Glucan endo-1,3-beta-glucosidase GV (316 aa).

Glutamate 99 acts as the Proton donor in catalysis. The active-site Nucleophile is the glutamate 239.

Belongs to the glycosyl hydrolase 17 family.

Its subcellular location is the cytoplasm. It catalyses the reaction Hydrolysis of (1-&gt;3)-beta-D-glucosidic linkages in (1-&gt;3)-beta-D-glucans.. May provide a degree of protection against microbial invasion of germinated barley grain through its ability to degrade fungal cell wall polysaccharides. The sequence is that of Glucan endo-1,3-beta-glucosidase GV from Hordeum vulgare (Barley).